A 333-amino-acid chain; its full sequence is MSNLITIERHILEQQKFFPEAHGELTDLLTDVAFAAKLVRREVVRAGLVDILGLAGSTNVQGEEVKKLDLFANEQIISAIGAHGRFAVMGSEENEEIIIPTNNESGNYVLLFDPLDGSSNIDVNVSVGTIFSIYKLKTSDPAKASLADCLQAGSEQVAAGYVIYGSSVVMVYTTGHGVHGFTYDPTIGEFLLSDENITTPKRGKYYSMNEGSYAQFNEGTKRYLDYIKTEDKATNRPYSTRYIGSLVADFHRNLLTGGIFIYPPTGKHPNGKLRLMYEANPLAFICEQAGGRATNGKERILDIKPTELHQRTPLYIGSTDDVMVAEEFEQGKR.

Residues Glu92, Asp113, Leu115, and Asp116 each coordinate Mg(2+). Substrate-binding positions include 116 to 119 (DGSS), Asn209, Tyr242, and Lys272. Glu278 contacts Mg(2+).

The protein belongs to the FBPase class 1 family. As to quaternary structure, homotetramer. Mg(2+) is required as a cofactor.

It is found in the cytoplasm. It catalyses the reaction beta-D-fructose 1,6-bisphosphate + H2O = beta-D-fructose 6-phosphate + phosphate. It functions in the pathway carbohydrate biosynthesis; Calvin cycle. In Chlorobium chlorochromatii (strain CaD3), this protein is Fructose-1,6-bisphosphatase class 1.